We begin with the raw amino-acid sequence, 394 residues long: Elongation factor Tu 1 (394 aa).

The 195-residue stretch at 10–204 (KPHVNVGTIG…ALDSYIPQPE (195 aa)) folds into the tr-type G domain. Residues 19–26 (GHVDHGKT) are G1. Position 19–26 (19–26 (GHVDHGKT)) interacts with GTP. Thr-26 is a Mg(2+) binding site. The interval 60-64 (GITIN) is G2. Positions 81–84 (DCPG) are G3. Residues 81–85 (DCPGH) and 136–139 (NKCD) contribute to the GTP site. Positions 136–139 (NKCD) are G4. Residues 174–176 (SAL) are G5.

The protein belongs to the TRAFAC class translation factor GTPase superfamily. Classic translation factor GTPase family. EF-Tu/EF-1A subfamily. As to quaternary structure, monomer.

The protein localises to the cytoplasm. The enzyme catalyses GTP + H2O = GDP + phosphate + H(+). Its function is as follows. GTP hydrolase that promotes the GTP-dependent binding of aminoacyl-tRNA to the A-site of ribosomes during protein biosynthesis. This Yersinia pestis bv. Antiqua (strain Nepal516) protein is Elongation factor Tu 1.